Here is a 1010-residue protein sequence, read N- to C-terminus: Phosphatidylserine decarboxylase proenzyme 2 (1010 aa).

2 consecutive C2 domains span residues 1-114 and 247-370; these read MSQA…SSWE and DFES…DKPC. Aspartate 342, serine 345, and aspartate 348 together coordinate Ca(2+). An EF-hand domain is found at 458-493; it reads LRRQLWMHLLQGNDTQMKGTLDLIELNYFVDCLGSN. Active-site charge relay system; for autoendoproteolytic cleavage activity residues include aspartate 734, histidine 793, and serine 880. The active-site Schiff-base intermediate with substrate; via pyruvic acid; for decarboxylase activity is the serine 880. The residue at position 880 (serine 880) is a Pyruvic acid (Ser); by autocatalysis.

This sequence belongs to the phosphatidylserine decarboxylase family. PSD-B subfamily. Eukaryotic type II sub-subfamily. In terms of assembly, heterodimer of a large membrane-associated beta subunit and a small pyruvoyl-containing alpha subunit. Interacts with pstB2. This interaction may be a means to structurally tether the donor membrane (ER) harboring PstB2 to acceptor membranes (Golgi/endosomes) harboring PSD2 during PtdSer transport to the site of PtdEtn synthesis. Requires pyruvate as cofactor. The cofactor is Ca(2+). In terms of processing, is synthesized initially as an inactive proenzyme. Formation of the active enzyme involves a self-maturation process in which the active site pyruvoyl group is generated from an internal serine residue via an autocatalytic post-translational modification. Two non-identical subunits are generated from the proenzyme in this reaction, and the pyruvate is formed at the N-terminus of the alpha chain, which is derived from the carboxyl end of the proenzyme. The autoendoproteolytic cleavage occurs by a canonical serine protease mechanism, in which the side chain hydroxyl group of the serine supplies its oxygen atom to form the C-terminus of the beta chain, while the remainder of the serine residue undergoes an oxidative deamination to produce ammonia and the pyruvoyl prosthetic group on the alpha chain. During this reaction, the Ser that is part of the protease active site of the proenzyme becomes the pyruvoyl prosthetic group, which constitutes an essential element of the active site of the mature decarboxylase.

It localises to the golgi apparatus membrane. Its subcellular location is the endosome membrane. It carries out the reaction a 1,2-diacyl-sn-glycero-3-phospho-L-serine + H(+) = a 1,2-diacyl-sn-glycero-3-phosphoethanolamine + CO2. It functions in the pathway phospholipid metabolism; phosphatidylethanolamine biosynthesis; phosphatidylethanolamine from CDP-diacylglycerol: step 2/2. In terms of biological role, catalyzes the formation of phosphatidylethanolamine (PtdEtn) from phosphatidylserine (PtdSer). Plays a central role in phospholipid metabolism and in the interorganelle trafficking of phosphatidylserine. This Komagataella phaffii (strain GS115 / ATCC 20864) (Yeast) protein is Phosphatidylserine decarboxylase proenzyme 2.